A 637-amino-acid polypeptide reads, in one-letter code: DNA primase (637 aa).

A CHC2-type zinc finger spans residues Cys39 to Cys63. The 82-residue stretch at His257–Asp338 folds into the Toprim domain. 3 residues coordinate Mg(2+): Glu263, Asp307, and Asp309.

It belongs to the DnaG primase family. Monomer. Interacts with DnaB. Zn(2+) serves as cofactor. Requires Mg(2+) as cofactor.

It carries out the reaction ssDNA + n NTP = ssDNA/pppN(pN)n-1 hybrid + (n-1) diphosphate.. In terms of biological role, RNA polymerase that catalyzes the synthesis of short RNA molecules used as primers for DNA polymerase during DNA replication. The chain is DNA primase from Lactococcus lactis subsp. lactis (strain IL1403) (Streptococcus lactis).